Consider the following 350-residue polypeptide: Hydroxymethylglutaryl-CoA synthase (350 aa).

Glu-83 (proton donor/acceptor) is an active-site residue. Cys-115 acts as the Acyl-thioester intermediate in catalysis. Residues Cys-115 and Thr-156 each coordinate (3S)-3-hydroxy-3-methylglutaryl-CoA. A CoA-binding site is contributed by Arg-204. Thr-206 and His-239 together coordinate (3S)-3-hydroxy-3-methylglutaryl-CoA. Residue His-239 is the Proton donor/acceptor of the active site. Lys-244 contributes to the CoA binding site. 2 residues coordinate (3S)-3-hydroxy-3-methylglutaryl-CoA: Asn-271 and Ser-301.

The protein belongs to the thiolase-like superfamily. Archaeal HMG-CoA synthase family. As to quaternary structure, interacts with acetoacetyl-CoA thiolase that catalyzes the precedent step in the pathway and with a DUF35 protein. The acetoacetyl-CoA thiolase/HMG-CoA synthase complex channels the intermediate via a fused CoA-binding site, which allows for efficient coupling of the endergonic thiolase reaction with the exergonic HMGCS reaction.

It carries out the reaction acetoacetyl-CoA + acetyl-CoA + H2O = (3S)-3-hydroxy-3-methylglutaryl-CoA + CoA + H(+). It participates in metabolic intermediate biosynthesis; (R)-mevalonate biosynthesis; (R)-mevalonate from acetyl-CoA: step 2/3. Its function is as follows. Catalyzes the condensation of acetyl-CoA with acetoacetyl-CoA to form 3-hydroxy-3-methylglutaryl-CoA (HMG-CoA). Functions in the mevalonate (MVA) pathway leading to isopentenyl diphosphate (IPP), a key precursor for the biosynthesis of isoprenoid compounds that are building blocks of archaeal membrane lipids. The sequence is that of Hydroxymethylglutaryl-CoA synthase from Pyrococcus horikoshii (strain ATCC 700860 / DSM 12428 / JCM 9974 / NBRC 100139 / OT-3).